Consider the following 117-residue polypeptide: Large ribosomal subunit protein uL18 (117 aa).

It belongs to the universal ribosomal protein uL18 family. Part of the 50S ribosomal subunit; part of the 5S rRNA/L5/L18/L25 subcomplex. Contacts the 5S and 23S rRNAs.

In terms of biological role, this is one of the proteins that bind and probably mediate the attachment of the 5S RNA into the large ribosomal subunit, where it forms part of the central protuberance. The protein is Large ribosomal subunit protein uL18 of Blochmanniella pennsylvanica (strain BPEN).